A 379-amino-acid chain; its full sequence is 1-deoxy-D-xylulose 5-phosphate reductoisomerase (379 aa).

NADPH contacts are provided by Thr10, Gly11, Ser12, Ile13, Arg38, Asn39, and Asn121. A 1-deoxy-D-xylulose 5-phosphate-binding site is contributed by Lys122. Glu123 provides a ligand contact to NADPH. Position 147 (Asp147) interacts with Mn(2+). Ser148, Glu149, Ser173, and His196 together coordinate 1-deoxy-D-xylulose 5-phosphate. Glu149 lines the Mn(2+) pocket. Gly202 is an NADPH binding site. 1-deoxy-D-xylulose 5-phosphate is bound by residues Ser209, Asn214, Lys215, and Glu218. Glu218 serves as a coordination point for Mn(2+).

Belongs to the DXR family. Requires Mg(2+) as cofactor. Mn(2+) serves as cofactor.

It carries out the reaction 2-C-methyl-D-erythritol 4-phosphate + NADP(+) = 1-deoxy-D-xylulose 5-phosphate + NADPH + H(+). The protein operates within isoprenoid biosynthesis; isopentenyl diphosphate biosynthesis via DXP pathway; isopentenyl diphosphate from 1-deoxy-D-xylulose 5-phosphate: step 1/6. Functionally, catalyzes the NADPH-dependent rearrangement and reduction of 1-deoxy-D-xylulose-5-phosphate (DXP) to 2-C-methyl-D-erythritol 4-phosphate (MEP). This is 1-deoxy-D-xylulose 5-phosphate reductoisomerase from Chlamydia trachomatis serovar A (strain ATCC VR-571B / DSM 19440 / HAR-13).